The following is a 141-amino-acid chain: Nucleoside diphosphate kinase (141 aa).

Residues Lys-11, Phe-59, Arg-87, Thr-93, Arg-104, and Asn-114 each contribute to the ATP site. The active-site Pros-phosphohistidine intermediate is the His-117.

This sequence belongs to the NDK family. As to quaternary structure, homotetramer. The cofactor is Mg(2+).

The protein localises to the cytoplasm. The catalysed reaction is a 2'-deoxyribonucleoside 5'-diphosphate + ATP = a 2'-deoxyribonucleoside 5'-triphosphate + ADP. The enzyme catalyses a ribonucleoside 5'-diphosphate + ATP = a ribonucleoside 5'-triphosphate + ADP. In terms of biological role, major role in the synthesis of nucleoside triphosphates other than ATP. The ATP gamma phosphate is transferred to the NDP beta phosphate via a ping-pong mechanism, using a phosphorylated active-site intermediate. This Acidovorax ebreus (strain TPSY) (Diaphorobacter sp. (strain TPSY)) protein is Nucleoside diphosphate kinase.